A 152-amino-acid polypeptide reads, in one-letter code: Deoxyuridine 5'-triphosphate nucleotidohydrolase (152 aa).

Residues R71 to G73, N84, and T88 to D90 each bind substrate.

It belongs to the dUTPase family. It depends on Mg(2+) as a cofactor.

It carries out the reaction dUTP + H2O = dUMP + diphosphate + H(+). It functions in the pathway pyrimidine metabolism; dUMP biosynthesis; dUMP from dCTP (dUTP route): step 2/2. In terms of biological role, this enzyme is involved in nucleotide metabolism: it produces dUMP, the immediate precursor of thymidine nucleotides and it decreases the intracellular concentration of dUTP so that uracil cannot be incorporated into DNA. In Maricaulis maris (strain MCS10) (Caulobacter maris), this protein is Deoxyuridine 5'-triphosphate nucleotidohydrolase.